A 310-amino-acid chain; its full sequence is ADP-L-glycero-D-manno-heptose-6-epimerase (310 aa).

Residues 10–11 (FI), 31–32 (DN), lysine 38, lysine 53, 75–79 (EGACS), and asparagine 92 contribute to the NADP(+) site. The active-site Proton acceptor is the tyrosine 140. Lysine 144 contributes to the NADP(+) binding site. Asparagine 169 contacts substrate. Residues valine 170 and lysine 178 each coordinate NADP(+). Residue lysine 178 is the Proton acceptor of the active site. Substrate-binding positions include serine 180, histidine 187, 201 to 204 (FEGS), and arginine 209. Lysine 267 is subject to N6-acetyllysine. Tyrosine 272 provides a ligand contact to substrate.

Belongs to the NAD(P)-dependent epimerase/dehydratase family. HldD subfamily. In terms of assembly, homopentamer. It depends on NADP(+) as a cofactor.

The enzyme catalyses ADP-D-glycero-beta-D-manno-heptose = ADP-L-glycero-beta-D-manno-heptose. It functions in the pathway nucleotide-sugar biosynthesis; ADP-L-glycero-beta-D-manno-heptose biosynthesis; ADP-L-glycero-beta-D-manno-heptose from D-glycero-beta-D-manno-heptose 7-phosphate: step 4/4. Its function is as follows. Catalyzes the interconversion between ADP-D-glycero-beta-D-manno-heptose and ADP-L-glycero-beta-D-manno-heptose via an epimerization at carbon 6 of the heptose. This is ADP-L-glycero-D-manno-heptose-6-epimerase from Escherichia coli (strain SMS-3-5 / SECEC).